The sequence spans 408 residues: 4-O-methyl-glucuronoyl methylesterase 1 (408 aa).

A signal peptide spans 1–19; that stretch reads MASSSRFAALLLLALPALA. 3 disulfide bridges follow: Cys31–Cys65, Cys218–Cys354, and Cys250–Cys326. The GXSYXG catalytic site motif signature appears at 217-222; it reads GCSRDG. The Nucleophile role is filled by Ser219. Residues Lys223, Gln265, and Glu273 each coordinate substrate. N-linked (GlcNAc...) asparagine glycosylation is present at Asn287. A substrate-binding site is contributed by Trp317. N-linked (GlcNAc...) asparagine glycosylation occurs at Asn350. His353 acts as the Proton donor/acceptor in catalysis. N-linked (GlcNAc...) asparagine glycans are attached at residues Asn390, Asn395, and Asn401.

The protein belongs to the carbohydrate esterase 15 (CE15) family.

It is found in the secreted. It catalyses the reaction a 4-O-methyl-alpha-D-glucuronosyl ester derivative + H2O = 4-O-methyl-alpha-D-glucuronate derivative + an alcohol + H(+). In terms of biological role, glucuronoyl esterase which may play a significant role in biomass degradation, as it is considered to disconnect hemicellulose from lignin through the hydrolysis of the ester bond between 4-O-methyl-D-glucuronic acid residues of glucuronoxylans and aromatic alcohols of lignin. Can hydrolyze benzyl glucuronic acid (BnGlcA), allyl glucuronic acid (allylGlcA) and to a lower degree methyl glucuronic acid (MeGlcA) in vitro. The protein is 4-O-methyl-glucuronoyl methylesterase 1 of Wolfiporia cocos (strain MD-104) (Brown rot fungus).